Reading from the N-terminus, the 135-residue chain is Transcription antitermination protein NusB (135 aa).

It belongs to the NusB family.

Involved in transcription antitermination. Required for transcription of ribosomal RNA (rRNA) genes. Binds specifically to the boxA antiterminator sequence of the ribosomal RNA (rrn) operons. The sequence is that of Transcription antitermination protein NusB from Clostridium acetobutylicum (strain ATCC 824 / DSM 792 / JCM 1419 / IAM 19013 / LMG 5710 / NBRC 13948 / NRRL B-527 / VKM B-1787 / 2291 / W).